Consider the following 347-residue polypeptide: VIP36-like protein (347 aa).

The first 43 residues, 1–43, serve as a signal peptide directing secretion; sequence MAAASRPSWWQRWRRRAWARDGAKLLLFLLLLGSGPGPRHVRA. At 44-312 the chain is on the lumenal side; it reads GQAVEYLKRE…VPPTPLSGLA (269 aa). In terms of domain architecture, L-type lectin-like spans 48 to 273; sequence EYLKREHSLS…DVISLKLFEL (226 aa). A carbohydrate is bound by residues serine 92 and aspartate 127. Ca(2+) is bound by residues aspartate 158, tyrosine 160, and asparagine 162. 160-162 is a binding site for a carbohydrate; the sequence is YPN. N-linked (GlcNAc...) asparagine glycosylation is present at asparagine 180. Histidine 187 serves as a coordination point for a carbohydrate. Aspartate 190 provides a ligand contact to Ca(2+). Cysteine 199 and cysteine 236 are disulfide-bonded. Residue 257–259 participates in a carbohydrate binding; that stretch reads GDL. The helical transmembrane segment at 313 to 335 threads the bilayer; it reads LFLIVFFSLVFSVFAIVIGIILY. The Cytoplasmic segment spans residues 336 to 347; the sequence is NKWQDQSRKRFY. The short motif at 343 to 345 is the Endoplasmic reticulum retention signal element; it reads RKR.

It localises to the endoplasmic reticulum membrane. Its subcellular location is the golgi apparatus membrane. May be involved in the regulation of export from the endoplasmic reticulum of a subset of glycoproteins. May function as a regulator of ERGIC-53. In Mus musculus (Mouse), this protein is VIP36-like protein (Lman2l).